The primary structure comprises 120 residues: Large ribosomal subunit protein P3y (120 aa).

Residues 81-92 are compositionally biased toward gly residues; sequence GGAAAGGGGGGE. The disordered stretch occupies residues 81-120; the sequence is GGAAAGGGGGGEAAAATKEEEKKKEESEEEEGDFGFDLFG. The span at 97-106 shows a compositional bias: basic and acidic residues; that stretch reads TKEEEKKKEE.

The protein belongs to the eukaryotic ribosomal protein P1/P2 family.

Plays an important role in the elongation step of protein synthesis. The sequence is that of Large ribosomal subunit protein P3y (RPP3B) from Arabidopsis thaliana (Mouse-ear cress).